Here is a 106-residue protein sequence, read N- to C-terminus: uncharacterized protein (106 aa).

This is an uncharacterized protein from Pseudanabaena tenuis (strain PCC 7409).